The following is a 132-amino-acid chain: Small ribosomal subunit protein uS8 (132 aa).

The protein belongs to the universal ribosomal protein uS8 family. Part of the 30S ribosomal subunit. Contacts proteins S5 and S12.

In terms of biological role, one of the primary rRNA binding proteins, it binds directly to 16S rRNA central domain where it helps coordinate assembly of the platform of the 30S subunit. In Lactobacillus johnsonii (strain CNCM I-12250 / La1 / NCC 533), this protein is Small ribosomal subunit protein uS8.